We begin with the raw amino-acid sequence, 52 residues long: Dibenzothiophene metabolism operon protein NahQ/DoxH (52 aa).

It functions in the pathway aromatic compound metabolism; naphthalene degradation. In terms of biological role, may be involved in the conversion of 2-hydroxy-4-(2'-oxo-3,5-cyclohexadienyl)-buta-2,4-dienoate to cis-O-hydroxybenzylidenepyruvate. DoxH and DoxJ encode different enzymes that may have interchangeable functions. The protein is Dibenzothiophene metabolism operon protein NahQ/DoxH (nahQ) of Pseudomonas putida (Arthrobacter siderocapsulatus).